A 286-amino-acid polypeptide reads, in one-letter code: MSVTLQTVLYSLQEEQARLKMRLQELQQLKRERTGSPGAKIPFSVPEVPLVFQGQTKQGRQVPKFVVSNLKVCCPLPEGSALVTFEDPKVVDRLLQQKEHRVNLEDCRLRVQVQPLELPVVTNIQVSSQPDNHRVLVSGFPAGLRLSEEELLDKLEIFFGKAKNGGGDVETREMLQGTVMLGFADEEVAQHLCQIGQFRVPLDRQQVLLRVSPYVSGEIQKAEIKFQQAPHSVLVTNIPDVMDAQELHDILEIHFQKPTRGGGEVEALTVVPSGQQGLAIFTSESS.

The tract at residues 5–26 (LQTVLYSLQEEQARLKMRLQEL) is leucine-zipper. NID domains follow at residues 81-170 (ALVT…GDVE) and 183-266 (FADE…GEVE).

It belongs to the NMI family. In terms of assembly, homodimer. Also interacts with B-ATF. Interacts with TRIM21. Interacts (via NID domains) with NMI (via NID domains); the interaction is direct and is facilitated by TRIM21. Phosphorylated. Dephosphorylation correlates with the formation of a complex with NMI.

The protein localises to the cytoplasm. Its subcellular location is the nucleus. It localises to the secreted. Acts as a signaling pathway regulator involved in innate immune system response. In response to interferon IFN-alpha, associates in a complex with transcriptional regulator NMI to regulate immune response; the complex formation prevents proteasome-mediated degradation of IFI35 and correlates with IFI35 dephosphorylation. In complex with NMI, inhibits virus-triggered type I interferon/IFN-beta production. In complex with NMI, negatively regulates nuclear factor NF-kappa-B signaling by inhibiting the nuclear translocation, activation and transcription of the NF-kappa-B subunit p65/RELA, resulting in the inhibition of endothelial cell proliferation, migration and re-endothelialization of injured arteries. Beside its role as an intracellular signaling pathway regulator, also functions extracellularly as damage-associated molecular patterns (DAMPs) to promote inflammation when actively released by macrophage to the extracellular space during cell injury and pathogen invasion. Macrophage-secreted IFI35 activates NF-kappa-B signaling in adjacent macrophages through Toll-like receptor 4/TLR4 activation, thereby inducing NF-kappa-B translocation from the cytoplasm into the nucleus which promotes the release of pro-inflammatory cytokines. This is Interferon-induced 35 kDa protein homolog from Mus musculus (Mouse).